Reading from the N-terminus, the 467-residue chain is MKEDKENTRPREKKVEIKCDENDKQEKPCKEKKEAMTKIVIRRLPPTLTKEDLEEQLQPLPELDYLEFFSSDTSLFPHLFARAYLNFKNQDDIVLFRDRFDGYVFIDNRGQEYPAIVEFAPFQKVAKKRSKKKDAKSGTIDDDADYKKFLEFYNGDEEKSPSNPEILLEEIEAKTKELSSKKTTPLLDFLKNKQRIREEKKEERRRREIERKRLREEERRKWREEDRRKRKEAEKLKKVEKAFEKDKDQHKDEQPKIKLLRKPEKADDGETEKPKDKPKKQDRERQKEDRPSGGDLKKRQNGEHREEKGGKPEDVGHKEYRDRDGERERDRDRERERRQKEKERIRRQDEERRRRREHQDGENNYRKREEEGKKDKERVWEKRKNEHTGESSGSARPEKSSRDSKKEESARKDRLRNKDRPAIQLYQPGSRNRTRGGGGGGGTGGDGPAAEKRAEREAKKNQEKAAE.

Disordered regions lie at residues 1 to 30 (MKEDKENTRPREKKVEIKCDENDKQEKPCK) and 197 to 467 (REEK…KAAE). Composition is skewed to basic and acidic residues over residues 197–389 (REEK…EHTG) and 396–421 (RPEKSSRDSKKEESARKDRLRNKDRP). A compositionally biased stretch (gly residues) spans 435–447 (RGGGGGGGTGGDG). Residues 449–467 (AAEKRAEREAKKNQEKAAE) are compositionally biased toward basic and acidic residues.

The protein belongs to the RENT3 family.

Its subcellular location is the nucleus. It localises to the cytoplasm. Its function is as follows. Involved in nonsense-mediated decay (NMD) of mRNAs containing premature stop codons by associating with the nuclear exon junction complex (EJC) and serving as link between the EJC core and NMD machinery. Recruits UPF2 at the cytoplasmic side of the nuclear envelope and the subsequent formation of an UPF1-UPF2-UPF3 surveillance complex (including UPF1 bound to release factors at the stalled ribosome) is believed to activate NMD. In cooperation with UPF2 stimulates both ATPase and RNA helicase activities of UPF1. Binds spliced mRNA upstream of exon-exon junctions. The chain is Regulator of nonsense transcripts 3B from Danio rerio (Zebrafish).